The sequence spans 727 residues: Anaphase-promoting complex subunit 5 (727 aa).

A Phosphoserine modification is found at Ser-180. TPR repeat units follow at residues Gln-194–Asp-234, Phe-235–Leu-285, Arg-286–His-322, Val-323–Pro-359, Arg-360–Ile-390, Asp-391–Phe-438, Ala-439–Asn-472, Ser-473–Gly-512, Ile-513–Val-552, Ile-553–Ala-592, Ser-593–Lys-632, Gly-633–Glu-668, and Ala-669–Val-708. Thr-217 is subject to Phosphothreonine.

The protein belongs to the APC5 family. In terms of assembly, the mammalian APC/C is composed at least of 14 distinct subunits ANAPC1, ANAPC2, CDC27/APC3, ANAPC4, ANAPC5, CDC16/APC6, ANAPC7, CDC23/APC8, ANAPC10, ANAPC11, CDC26/APC12, ANAPC13, ANAPC15 and ANAPC16 that assemble into a complex of at least 19 chains with a combined molecular mass of around 1.2 MDa; APC/C interacts with FZR1 and FBXO5.

The protein localises to the nucleus. It localises to the cytoplasm. Its subcellular location is the cytoskeleton. It is found in the spindle. It functions in the pathway protein modification; protein ubiquitination. Its function is as follows. Component of the anaphase promoting complex/cyclosome (APC/C), a cell cycle-regulated E3 ubiquitin ligase that controls progression through mitosis and the G1 phase of the cell cycle. The APC/C complex acts by mediating ubiquitination and subsequent degradation of target proteins: it mainly mediates the formation of 'Lys-11'-linked polyubiquitin chains and, to a lower extent, the formation of 'Lys-48'- and 'Lys-63'-linked polyubiquitin chains. The APC/C complex catalyzes assembly of branched 'Lys-11'-/'Lys-48'-linked branched ubiquitin chains on target proteins. The protein is Anaphase-promoting complex subunit 5 (Anapc5) of Rattus norvegicus (Rat).